Consider the following 582-residue polypeptide: Semenogelin-2 (582 aa).

The N-terminal stretch at 1–23 (MKSIILFVLSLLLILEKQAAVMG) is a signal peptide. The interval 24 to 59 (QKGGSKGQLPSGSSQFPHGQKGQHYFGQKDQQHTKS) is disordered. The segment covering 31–40 (QLPSGSSQFP) has biased composition (polar residues). 3 repeat units span residues 70 to 129 (HVDI…IVIH), 141 to 200 (NPSQ…QTEE), and 201 to 260 (LVVN…QDEL). The repeat-rich region stretch occupies residues 70-559 (HVDINDHDWT…SSESHNIVIT (490 aa)). Disordered stretches follow at residues 132–160 (GGQA…SQCS), 173–194 (KEQA…QSSY), 228–248 (EEHS…RLQH), and 269–582 (QTKN…PIST). 2 stretches are compositionally biased toward polar residues: residues 137–160 (HGTQ…SQCS) and 174–194 (EQAS…QSSY). The interval 261-500 (LVYNKNQHQT…QSSISFQIEK (240 aa)) is 4 X 60 AA tandem repeats, type I. Asn-272 carries an N-linked (GlcNAc...) asparagine glycan. Positions 292 to 310 (RTEERQLHHGEKSVQKDVS) are enriched in basic and acidic residues. Positions 325–334 (KSQNQVTIHS) are enriched in polar residues. Positions 335–345 (QDQEHGHKENK) are enriched in basic and acidic residues. Residues 372 to 397 (GSISIQTEEQIHGKSQNQVRIPSQAQ) are compositionally biased toward polar residues. Residues 413 to 426 (TEERRLNSGEKDVQ) show a composition bias toward basic and acidic residues. The span at 445 to 455 (KSQNQVTIPSQ) shows a compositional bias: polar residues. Residues 456 to 465 (DQEHGHKENK) are compositionally biased toward basic and acidic residues. Polar residues-rich tracts occupy residues 482-496 (GKST…SISF) and 506-532 (SQIQ…QSAD). A 3-2 repeat occupies 501–559 (LVEGKSQIQTPNPNQDQWSGQNAKGKSGQSADSKQDLLSHEQKGRYKQESSESHNIVIT). 2 stretches are compositionally biased toward basic and acidic residues: residues 533-552 (SKQD…ESSE) and 559-582 (TEHE…PIST).

Belongs to the semenogelin family. In terms of assembly, interacts with SERPINA5. Semenogelin-2 is thought to form both the 71 kDa polypeptide and, in its glycosylated form, the 76 kDa polypeptide. In terms of tissue distribution, seminal vesicles, and to a much lesser extent, epididymis.

It localises to the secreted. Functionally, participates in the formation of a gel matrix (sperm coagulum) entrapping the accessory gland secretions and ejaculated spermatozoa. The polypeptide is Semenogelin-2 (SEMG2) (Homo sapiens (Human)).